The primary structure comprises 128 residues: Azurin (128 aa).

The 128-residue stretch at 1–128 (AECSVDIQGN…AMMKGTLTLK (128 aa)) folds into the Plastocyanin-like domain. H46, C112, H117, and M121 together coordinate Cu cation.

It localises to the periplasm. Transfers electrons from cytochrome c551 to cytochrome oxidase. This Pseudomonas denitrificans protein is Azurin.